The primary structure comprises 271 residues: Formamidopyrimidine-DNA glycosylase (271 aa).

Pro2 (schiff-base intermediate with DNA) is an active-site residue. Glu3 (proton donor) is an active-site residue. Catalysis depends on Lys56, which acts as the Proton donor; for beta-elimination activity. The DNA site is built by His89, Arg107, and Lys151. The FPG-type zinc finger occupies 236-270 (NVYGRAGLQCRQCGTPVRLSRQGQRSTYFCPHCQR). The active-site Proton donor; for delta-elimination activity is Arg260.

This sequence belongs to the FPG family. As to quaternary structure, monomer. Requires Zn(2+) as cofactor.

The catalysed reaction is Hydrolysis of DNA containing ring-opened 7-methylguanine residues, releasing 2,6-diamino-4-hydroxy-5-(N-methyl)formamidopyrimidine.. It catalyses the reaction 2'-deoxyribonucleotide-(2'-deoxyribose 5'-phosphate)-2'-deoxyribonucleotide-DNA = a 3'-end 2'-deoxyribonucleotide-(2,3-dehydro-2,3-deoxyribose 5'-phosphate)-DNA + a 5'-end 5'-phospho-2'-deoxyribonucleoside-DNA + H(+). Functionally, involved in base excision repair of DNA damaged by oxidation or by mutagenic agents. Acts as a DNA glycosylase that recognizes and removes damaged bases. Has a preference for oxidized purines, such as 7,8-dihydro-8-oxoguanine (8-oxoG). Has AP (apurinic/apyrimidinic) lyase activity and introduces nicks in the DNA strand. Cleaves the DNA backbone by beta-delta elimination to generate a single-strand break at the site of the removed base with both 3'- and 5'-phosphates. This chain is Formamidopyrimidine-DNA glycosylase, found in Acidovorax ebreus (strain TPSY) (Diaphorobacter sp. (strain TPSY)).